The following is a 346-amino-acid chain: N-acetyl-gamma-glutamyl-phosphate reductase (346 aa).

The active site involves cysteine 151.

The protein belongs to the NAGSA dehydrogenase family. Type 1 subfamily.

It localises to the cytoplasm. It carries out the reaction N-acetyl-L-glutamate 5-semialdehyde + phosphate + NADP(+) = N-acetyl-L-glutamyl 5-phosphate + NADPH + H(+). It functions in the pathway amino-acid biosynthesis; L-arginine biosynthesis; N(2)-acetyl-L-ornithine from L-glutamate: step 3/4. Functionally, catalyzes the NADPH-dependent reduction of N-acetyl-5-glutamyl phosphate to yield N-acetyl-L-glutamate 5-semialdehyde. This Ehrlichia chaffeensis (strain ATCC CRL-10679 / Arkansas) protein is N-acetyl-gamma-glutamyl-phosphate reductase.